The sequence spans 376 residues: E3 ubiquitin-protein ligase RNF34 (376 aa).

The FYVE-type zinc-finger motif lies at 56–107 (EGPNIVCKACGLSFSVFRKKHVCCDCKKDFCSLCSVSQENLRRCSTCHLLQE). Residues 115–134 (LMRLKVKDLRQYLLLRNIPT) enclose the SAP 1 domain. Phosphoserine is present on serine 169. The disordered stretch occupies residues 216–256 (IASANTDDDDDDDDDDDDDEDDDDEQEEEEQNPGLSKKKAR). A compositionally biased stretch (acidic residues) spans 221 to 246 (TDDDDDDDDDDDDDEDDDDEQEEEEQ). Residues serine 258 and serine 260 each carry the phosphoserine modification. In terms of domain architecture, SAP 2 spans 268 to 282 (VEGMSVRQLKEILAR). Residues 329 to 364 (CRICMDAVIDCVLLECGHMVTCTKCGKRMSECPICR) form an RING-type zinc finger.

Interacts with CASP8 and CASP10. Interacts with p53/TP53; involved in p53/TP53 ubiquitination. Interacts (via RING-type zinc finger) with MDM2; the interaction stabilizes MDM2. Interacts (via RING-type zinc finger) with PPARGC1A. Interacts with NOD1. In terms of processing, autoubiquitinated (in vitro). Post-translationally, proteolytically cleaved by caspases upon induction of apoptosis by TNF.

Its subcellular location is the cell membrane. It is found in the endomembrane system. The protein localises to the nucleus. The protein resides in the nucleus speckle. It localises to the cytoplasm. Its subcellular location is the cytosol. It carries out the reaction S-ubiquitinyl-[E2 ubiquitin-conjugating enzyme]-L-cysteine + [acceptor protein]-L-lysine = [E2 ubiquitin-conjugating enzyme]-L-cysteine + N(6)-ubiquitinyl-[acceptor protein]-L-lysine.. It functions in the pathway protein modification; protein ubiquitination. In terms of biological role, E3 ubiquitin-protein ligase that regulates several biological processes through the ubiquitin-mediated proteasomal degradation of various target proteins. Ubiquitinates the caspases CASP8 and CASP10, promoting their proteasomal degradation, to negatively regulate cell death downstream of death domain receptors in the extrinsic pathway of apoptosis. May mediate 'Lys-48'-linked polyubiquitination of RIPK1 and its subsequent proteasomal degradation thereby indirectly regulating the tumor necrosis factor-mediated signaling pathway. Negatively regulates p53/TP53 through its direct ubiquitination and targeting to proteasomal degradation. Indirectly, may also negatively regulate p53/TP53 through ubiquitination and degradation of SFN. Mediates PPARGC1A proteasomal degradation probably through ubiquitination thereby indirectly regulating the metabolism of brown fat cells. Possibly involved in innate immunity, through 'Lys-48'-linked polyubiquitination of NOD1 and its subsequent proteasomal degradation. This chain is E3 ubiquitin-protein ligase RNF34, found in Mus musculus (Mouse).